The following is a 525-amino-acid chain: G-protein regulator 2 (525 aa).

The 22-residue stretch at 424–445 folds into the GoLoco domain; it reads PVDMMDLIFSMSSRMDDQRTEL. Residues 489–525 are disordered; the sequence is TMNRILKRSKKSKSSLDSTNSIQGDDTRSDDVTMTSK.

In terms of assembly, interacts with gpr-1; gpr-1 forms a complex with lin-5 and GDP-bound goa-1.

The protein localises to the cytoplasm. It is found in the cell cortex. The protein resides in the cytoskeleton. It localises to the spindle. Functionally, in the 1-cell embryo, probably together with gpr-1, controls nuclear rotation and spindle elongation during mitosis. Complex of gpr-1 and gpr-2, in association with lin-5, activates G-protein signaling to affect mitotic spindle force. Polarity determinants (par genes) may regulate lin-5/gpr-1/gpr-2/goa-1 locally to create the asymmetric forces that drive spindle movement. This chain is G-protein regulator 2 (gpr-2), found in Caenorhabditis elegans.